The sequence spans 397 residues: Succinyl-diaminopimelate desuccinylase (397 aa).

A Zn(2+)-binding site is contributed by His-73. Asp-75 is a catalytic residue. Residue Asp-106 coordinates Zn(2+). Glu-140 serves as the catalytic Proton acceptor. The Zn(2+) site is built by Glu-141, Glu-169, and His-366.

This sequence belongs to the peptidase M20A family. DapE subfamily. In terms of assembly, homodimer. The cofactor is Zn(2+). Co(2+) is required as a cofactor.

It catalyses the reaction N-succinyl-(2S,6S)-2,6-diaminopimelate + H2O = (2S,6S)-2,6-diaminopimelate + succinate. The protein operates within amino-acid biosynthesis; L-lysine biosynthesis via DAP pathway; LL-2,6-diaminopimelate from (S)-tetrahydrodipicolinate (succinylase route): step 3/3. Catalyzes the hydrolysis of N-succinyl-L,L-diaminopimelic acid (SDAP), forming succinate and LL-2,6-diaminopimelate (DAP), an intermediate involved in the bacterial biosynthesis of lysine and meso-diaminopimelic acid, an essential component of bacterial cell walls. This chain is Succinyl-diaminopimelate desuccinylase, found in Rhizobium leguminosarum bv. trifolii (strain WSM2304).